A 987-amino-acid chain; its full sequence is Mitotic checkpoint serine/threonine-protein kinase bub-1 (987 aa).

Disordered stretches follow at residues 278–385 (RRRH…TSKS) and 574–599 (LAAN…KDSS). The segment covering 350 to 364 (ERLKIMTAGRKDGNP) has biased composition (basic and acidic residues). A compositionally biased stretch (low complexity) spans 368-380 (STSISSNYSTASA). Positions 575–587 (AANQAVQPSVTES) are enriched in polar residues. The segment covering 588–599 (SKPERSDPKDSS) has biased composition (basic and acidic residues). The Protein kinase domain maps to 690-987 (LHIQTLIGQG…EACDLAANQK (298 aa)). ATP is bound by residues 696 to 704 (IGQGGYAKV) and K718. D814 serves as the catalytic Proton acceptor.

Belongs to the protein kinase superfamily. Ser/Thr protein kinase family. BUB1 subfamily. As to quaternary structure, interacts (via kinase domain) with mdf-1 (via coiled coil domain); the interaction recruits mdf-1 to unattached kinetochores during mitosis and between homologous chromosomes in early anaphase of meiosis I. May interact with bub-3; for localization at the kinetochore and the onset of anaphase.

It is found in the cytoplasm. The protein resides in the cell cortex. It localises to the nucleus. The protein localises to the chromosome. Its subcellular location is the centromere. It is found in the kinetochore. It carries out the reaction L-seryl-[protein] + ATP = O-phospho-L-seryl-[protein] + ADP + H(+). The enzyme catalyses L-threonyl-[protein] + ATP = O-phospho-L-threonyl-[protein] + ADP + H(+). Serine/threonine-protein kinase essential for spindle-assembly checkpoint signaling. Plays a key role in the recruitment of the checkpoint proteins bub-3, mdf-1 and mdf-2 to unattached kinetochores. mdf-1 recruitment is independent of bub-1 kinase activity. Has a role in the correct kinetochore localization of the spindly-like protein spdl-1. In addition, during meiotic anaphase I, controls the recruitment of hcp-1/2 and klp-19 to the ring-shaped domain formed between chromosomes. Involved in chromosome alignment, chromosome homolog segregation and spindle assembly. In association with bub-3 at the kinetochore region of chromosomes, promotes the onset on anaphase independently from spindle checkpoint signaling and promotes the formation of stable end-on bipolar attachments of chromosomes. Plays a role in nuclear envelope breakdown. Required maternally during embryogenesis and in the zygote for the postembryonic development of several tissues including ventral cord neurons, gonad, intestine and seam cells. The chain is Mitotic checkpoint serine/threonine-protein kinase bub-1 from Caenorhabditis elegans.